A 1980-amino-acid polypeptide reads, in one-letter code: Unconventional myosin-IXb (1980 aa).

Serine 2 carries the post-translational modification N-acetylserine. In terms of domain architecture, Ras-associating spans 15–114 (ATFHLHIYPQ…YYFLLQERNA (100 aa)). A Myosin motor domain is found at 146–954 (ADFDDLCNLP…ERQALQERLH (809 aa)). Position 239–246 (239–246 (GESGSGKT)) interacts with ATP. The interval 715-736 (GVSSPVTRSHVEELPRGANTPS) is disordered. Phosphoserine occurs at positions 717 and 718. Residues 845–856 (KAEPFFIRCIRS) are actin-binding. The neck or regulatory domain stretch occupies residues 941-1045 (LKETERQALQ…CRGHLQRRSF (105 aa)). IQ domains are found at residues 958–978 (LRRI…RHFV), 981–1001 (KHAA…RTLE), 1002–1024 (RTRA…AYHH), and 1025–1054 (QRHS…EKQK). Phosphoserine is present on serine 1046. The interval 1046 to 1980 (SQMMLEKQKA…ERAVRGAAEE (935 aa)) is tail. Disordered stretches follow at residues 1049-1281 (MLEK…HPDT), 1302-1380 (SQSL…QGDS), and 1394-1449 (DKKP…NRKV). Positions 1097-1106 (TWMNSKSPNG) are enriched in polar residues. A phosphoserine mark is found at serine 1108, serine 1115, and serine 1177. 2 stretches are compositionally biased toward basic and acidic residues: residues 1129–1177 (ESHE…RKAS) and 1186–1195 (EDTKEPREDG). Serine 1220, serine 1222, serine 1229, serine 1237, serine 1243, and serine 1247 each carry phosphoserine. The span at 1235–1247 (RVSPVLPSSSLES) shows a compositional bias: low complexity. A compositionally biased stretch (basic and acidic residues) spans 1250 to 1265 (DEDKGENSTKVQDKPE). Phosphoserine occurs at positions 1266, 1268, and 1304. Position 1319 is a phosphothreonine (threonine 1319). Phosphoserine is present on residues serine 1327, serine 1329, and serine 1337. Residues 1327-1344 (SFSTSDVSKLSPVKTSTE) are compositionally biased toward polar residues. Residues 1592–1641 (GHVFASYQVNIPQSCEQCLSYIWLMDKALLCSVCKMTCHKKCVHKIQSYC) form a Phorbol-ester/DAG-type zinc finger. At serine 1649 the chain carries Phosphoserine. The region spanning 1663–1848 (DSLTSDKASV…MLIKEQMRKY (186 aa)) is the Rho-GAP domain. An interaction with RHOA region spans residues 1699–1704 (AANRTR). Residues 1841–1861 (IKEQMRKYKVKMEEINHLEAA) are a coiled coil. The residue at position 1886 (serine 1886) is a Phosphoserine. Positions 1891–1923 (VRTKSPRTPVVQDLEELGALPEEAAGGDEDREK) are disordered. Positions 1918–1948 (DEDREKEILMERIQSIKEEKEDITYRLPELD) form a coiled coil. Phosphoserine occurs at positions 1932, 1952, and 1959. Residues 1937–1953 (KEDITYRLPELDPRGSD) are compositionally biased toward basic and acidic residues. Residues 1937–1980 (KEDITYRLPELDPRGSDEENLDSETSASTESLLEERAVRGAAEE) are disordered. At threonine 1965 the chain carries Phosphothreonine. A compositionally biased stretch (basic and acidic residues) spans 1969 to 1980 (LEERAVRGAAEE).

The protein belongs to the TRAFAC class myosin-kinesin ATPase superfamily. Myosin family. As to quaternary structure, interacts (via IQ domains) with CALM. Interacts with RHOA. Interacts (via Rho-GAP domain) with ROBO1; this inhibits the interaction with RHOA and the stimulation of RHOA GTPase activity, and thereby increases the levels of active RHOA. Expressed in testis, lung, thymus, brain, liver, spleen and heart muscle. Detected in lung, testis, spleen and liver, and at reduced level in different brain regions (at protein level).

The protein resides in the cytoplasm. It is found in the cell cortex. It localises to the perinuclear region. The protein localises to the cytoskeleton. Myosins are actin-based motor molecules with ATPase activity. Unconventional myosins serve in intracellular movements. Binds actin with high affinity both in the absence and presence of ATP and its mechanochemical activity is inhibited by calcium ions. Also acts as a GTPase activator for RHOA. Plays a role in the regulation of cell migration via its role as RHOA GTPase activator. This is regulated by its interaction with the SLIT2 receptor ROBO1; interaction with ROBO1 impairs interaction with RHOA and subsequent activation of RHOA GTPase activity, and thereby leads to increased levels of active, GTP-bound RHOA. This chain is Unconventional myosin-IXb (Myo9b), found in Rattus norvegicus (Rat).